The following is a 382-amino-acid chain: Galactokinase (382 aa).

34-37 is a substrate binding site; the sequence is EHTD. 124-130 lines the ATP pocket; that stretch reads GAGLSSS. Mg(2+) is bound by residues Ser-130 and Glu-162. Residue Asp-174 is the Proton acceptor of the active site. Tyr-223 is a substrate binding site.

This sequence belongs to the GHMP kinase family. GalK subfamily.

Its subcellular location is the cytoplasm. The enzyme catalyses alpha-D-galactose + ATP = alpha-D-galactose 1-phosphate + ADP + H(+). Its pathway is carbohydrate metabolism; galactose metabolism. Functionally, catalyzes the transfer of the gamma-phosphate of ATP to D-galactose to form alpha-D-galactose-1-phosphate (Gal-1-P). The polypeptide is Galactokinase (Escherichia coli O157:H7 (strain EC4115 / EHEC)).